The chain runs to 328 residues: DNA-directed RNA polymerase subunit alpha (328 aa).

The interval 1–235 (MQGSVTEFLK…EQLDAFVDLR (235 aa)) is alpha N-terminal domain (alpha-NTD). The alpha C-terminal domain (alpha-CTD) stretch occupies residues 249–328 (FDPILLRPVD…ENWPPASLAE (80 aa)).

Belongs to the RNA polymerase alpha chain family. Homodimer. The RNAP catalytic core consists of 2 alpha, 1 beta, 1 beta' and 1 omega subunit. When a sigma factor is associated with the core the holoenzyme is formed, which can initiate transcription.

It catalyses the reaction RNA(n) + a ribonucleoside 5'-triphosphate = RNA(n+1) + diphosphate. Its function is as follows. DNA-dependent RNA polymerase catalyzes the transcription of DNA into RNA using the four ribonucleoside triphosphates as substrates. The sequence is that of DNA-directed RNA polymerase subunit alpha from Pseudoalteromonas translucida (strain TAC 125).